The primary structure comprises 127 residues: Histidine-containing phosphotransfer protein 4 (127 aa).

Positions Asn-27–Tyr-122 constitute an HPt domain. At His-68 the chain carries Phosphohistidine.

Interacts with the B-type response regulators ARR1 and ARR2. In terms of processing, two-component system major event consists of a His-to-Asp phosphorelay between a sensor histidine kinase (HK) and a response regulator (RR). In plants, the His-to-Asp phosphorelay involves an additional intermediate named Histidine-containing phosphotransfer protein (HPt). This multistep phosphorelay consists of a His-Asp-His-Asp sequential transfer of a phosphate group between first a His and an Asp of the HK protein, followed by the transfer to a conserved His of the HPt protein and finally the transfer to an Asp in the receiver domain of the RR protein. As to expression, predominantly expressed in aerial parts of the plant.

The protein localises to the cytoplasm. It localises to the cytosol. The protein resides in the nucleus. Functions as a two-component phosphorelay mediator between cytokinin sensor histidine kinases and response regulators (B-type ARRs). Plays an important role in propagating cytokinin signal transduction through the multistep His-to-Asp phosphorelay. The chain is Histidine-containing phosphotransfer protein 4 (AHP4) from Arabidopsis thaliana (Mouse-ear cress).